Here is a 284-residue protein sequence, read N- to C-terminus: Putative ABC transporter ATP-binding protein MG468.1 homolog (284 aa).

The 232-residue stretch at 53-284 (VLFKGVCKAV…PKTINEINWV (232 aa)) folds into the ABC transporter domain. Position 89–96 (89–96 (GKSGSGKT)) interacts with ATP.

It belongs to the ABC transporter superfamily.

The protein is Putative ABC transporter ATP-binding protein MG468.1 homolog of Mycoplasma pneumoniae (strain ATCC 29342 / M129 / Subtype 1) (Mycoplasmoides pneumoniae).